The chain runs to 161 residues: Bacterioferritin (161 aa).

The 145-residue stretch at 1–145 folds into the Ferritin-like diiron domain; sequence MKGEPKVIER…TQLDLLAKIG (145 aa). Fe cation is bound by residues Glu-18 and Glu-51. A heme b-binding site is contributed by Met-52. Residues His-54, Glu-94, Glu-127, and His-130 each coordinate Fe cation.

Belongs to the bacterioferritin family. In terms of assembly, homooligomer of 24 subunits, arranged as 12 dimers, that are packed together to form an approximately spherical molecule with a central cavity, in which large amounts of iron can be deposited. Requires heme b as cofactor.

The catalysed reaction is 4 Fe(2+) + O2 + 4 H(+) = 4 Fe(3+) + 2 H2O. The enzyme catalyses Fe(2+)(in) = Fe(2+)(out). Iron-storage protein, whose ferroxidase center binds Fe(2+), oxidizes it using dioxygen to Fe(3+), and participates in the subsequent Fe(3+) oxide mineral core formation within the central cavity of the BFR protein shell. In Brucella melitensis biotype 1 (strain ATCC 23456 / CCUG 17765 / NCTC 10094 / 16M), this protein is Bacterioferritin (bfr).